We begin with the raw amino-acid sequence, 151 residues long: Conidium-specific protein (151 aa).

The segment at 1-72 (MAKPHCSSRS…FSGDPDSEVE (72 aa)) is disordered. A compositionally biased stretch (basic and acidic residues) spans 48–60 (RKDNSADKGDTLR).

The sequence is that of Conidium-specific protein (SpoC1-C1D) from Emericella nidulans (strain FGSC A4 / ATCC 38163 / CBS 112.46 / NRRL 194 / M139) (Aspergillus nidulans).